A 49-amino-acid polypeptide reads, in one-letter code: Feruloyl esterase A (49 aa).

This sequence belongs to the AB hydrolase superfamily. FaeA family.

Its subcellular location is the secreted. The catalysed reaction is feruloyl-polysaccharide + H2O = ferulate + polysaccharide.. Involved in degradation of plant cell walls. Hydrolyzes the feruloyl-arabinose ester bond in arabinoxylans as well as the feruloyl-galactose and feruloyl-arabinose ester bonds in pectin. Active against methyl esters of sinapate (MSA), but not caffeate (MCA). The protein is Feruloyl esterase A of Talaromyces stipitatus (strain ATCC 10500 / CBS 375.48 / QM 6759 / NRRL 1006) (Penicillium stipitatum).